We begin with the raw amino-acid sequence, 280 residues long: Nitrogenase iron protein (280 aa).

9–16 contributes to the ATP binding site; that stretch reads GKGGIGKS. C97 is a binding site for [4Fe-4S] cluster. R100 bears the ADP-ribosylarginine; by dinitrogenase reductase ADP-ribosyltransferase mark. C132 contacts [4Fe-4S] cluster.

Belongs to the NifH/BchL/ChlL family. Homodimer. Requires [4Fe-4S] cluster as cofactor. The reversible ADP-ribosylation of Arg-100 inactivates the nitrogenase reductase and regulates nitrogenase activity.

The enzyme catalyses N2 + 8 reduced [2Fe-2S]-[ferredoxin] + 16 ATP + 16 H2O = H2 + 8 oxidized [2Fe-2S]-[ferredoxin] + 2 NH4(+) + 16 ADP + 16 phosphate + 6 H(+). Its function is as follows. The key enzymatic reactions in nitrogen fixation are catalyzed by the nitrogenase complex, which has 2 components: the iron protein and the molybdenum-iron protein. In Desulforudis audaxviator (strain MP104C), this protein is Nitrogenase iron protein.